A 372-amino-acid chain; its full sequence is THAP domain-containing protein 5 (372 aa).

The segment at 1–85 adopts a THAP-type zinc-finger fold; the sequence is MTRYCAATRC…LKPNAIPTLF (85 aa). Residues 306–362 adopt a coiled-coil conformation; it reads TDRHYLRQKIAKLQSKIAVLEAQENATLSRLRLLESVIAKLKQENLLSDEKLKILEN.

It is found in the nucleus. This is THAP domain-containing protein 5 (thap5) from Xenopus laevis (African clawed frog).